The following is a 272-amino-acid chain: Undecaprenyl-diphosphatase (272 aa).

Helical transmembrane passes span 1–21, 39–59, 91–111, 117–137, 151–171, 196–216, 228–248, and 251–271; these read MSTLEIIILALLQGLTEFLPI, QGLAFDVAVHVGTLLAVMMYF, WWILLATIPAGLFGLLGKDFI, SALVIAMTTLLFGFLLGFADI, LGLKGAMLIGLAQAVALIPGT, FLLSIPAIAMAGSYLTLKLIL, LGSLLAFVSAYACIHYFLILL, and LGMMPFVIYRLILGVGLLWFI.

The protein belongs to the UppP family.

It localises to the cell inner membrane. The enzyme catalyses di-trans,octa-cis-undecaprenyl diphosphate + H2O = di-trans,octa-cis-undecaprenyl phosphate + phosphate + H(+). In terms of biological role, catalyzes the dephosphorylation of undecaprenyl diphosphate (UPP). Confers resistance to bacitracin. This is Undecaprenyl-diphosphatase from Colwellia psychrerythraea (strain 34H / ATCC BAA-681) (Vibrio psychroerythus).